The following is an 808-amino-acid chain: Glutamate receptor 1.1 (808 aa).

The N-terminal stretch at 1–19 is a signal peptide; the sequence is MEILFSISILALLFSGVVA. At 20 to 541 the chain is on the extracellular side; the sequence is APSDDDVFEE…MWTFFDPFEK (522 aa). N-linked (GlcNAc...) asparagine glycans are attached at residues Asn-288, Asn-339, and Asn-504. A helical membrane pass occupies residues 542–562; sequence SLWLASGAFFVLTGIVVWLVE. The Cytoplasmic segment spans residues 563-570; sequence RSVNPEFQ. Residues 571-591 traverse the membrane as a helical segment; that stretch reads GSWGQQLSMMLWFGFSTIVFA. Residues 592 to 602 are Cytoplasmic-facing; the sequence is HREKLQKMSSR. Residues 603 to 623 traverse the membrane as a helical segment; the sequence is FLVIVWVFVVLILTSSYSANL. Over 624–771 the chain is Extracellular; sequence TSTKTISRMQ…SKRFTFRELR (148 aa). A helical membrane pass occupies residues 772–792; that stretch reads GLFIIAGAAHVLVLALHLFHT. Residues 793 to 808 lie on the Cytoplasmic side of the membrane; that stretch reads RQEVSRLCTKLQSFYK.

This sequence belongs to the glutamate-gated ion channel (TC 1.A.10.1) family. May form heteromers. As to expression, expressed predominantly in roots. First detected in the root-shoot junction, and later in lateral roots and at the margin of matures leaves.

It is found in the membrane. In terms of biological role, glutamate-gated receptor that probably acts as a non-selective cation channel. Can transport sodium, potassium, and calcium ions. Functions as a carbon and nitrogen regulator and/or sensor that regulates carbon and nitrogen metabolism and distinct physiological process such as germination through the control of acid abscisic (ABA) biosynthesis. May be involved in light-signal transduction and calcium homeostasis via the regulation of calcium influx into cells. Seems required for the regulation of the abscisic acid (ABA) signaling pathway that modulates many aspects of plant physiology such as seed germination and response to drought (e.g. stomata opening). This chain is Glutamate receptor 1.1 (GLR1.1), found in Arabidopsis thaliana (Mouse-ear cress).